Consider the following 186-residue polypeptide: Elongation factor P (186 aa).

This sequence belongs to the elongation factor P family.

The protein localises to the cytoplasm. Its pathway is protein biosynthesis; polypeptide chain elongation. In terms of biological role, involved in peptide bond synthesis. Stimulates efficient translation and peptide-bond synthesis on native or reconstituted 70S ribosomes in vitro. Probably functions indirectly by altering the affinity of the ribosome for aminoacyl-tRNA, thus increasing their reactivity as acceptors for peptidyl transferase. In Laribacter hongkongensis (strain HLHK9), this protein is Elongation factor P.